The primary structure comprises 244 residues: Transcriptional activator protein anr (244 aa).

21 to 149 (APLCLPLSLT…RLMSREIRDD (129 aa)) serves as a coordination point for a nucleoside 3',5'-cyclic phosphate. In terms of domain architecture, HTH crp-type spans 159–232 (KTADERIATF…GKEVHILDSI (74 aa)). Positions 192 to 211 (RNEIGNYLGLAVETVSRVFT) form a DNA-binding region, H-T-H motif.

In terms of biological role, transcriptional activator of anaerobic gene expression. The sequence is that of Transcriptional activator protein anr (anr) from Pseudomonas aeruginosa (strain ATCC 15692 / DSM 22644 / CIP 104116 / JCM 14847 / LMG 12228 / 1C / PRS 101 / PAO1).